The chain runs to 698 residues: DNA ligase (698 aa).

NAD(+)-binding positions include 40 to 44 (DDVYD), 89 to 90 (SL), and Glu123. The N6-AMP-lysine intermediate role is filled by Lys125. Residues Arg146, Glu184, Lys300, and Lys324 each coordinate NAD(+). Zn(2+)-binding residues include Cys417, Cys420, Cys435, and Cys441. A BRCT domain is found at 618–698 (SSASPVAGKA…EWLALTGAAD (81 aa)).

It belongs to the NAD-dependent DNA ligase family. LigA subfamily. Mg(2+) is required as a cofactor. Requires Mn(2+) as cofactor.

It carries out the reaction NAD(+) + (deoxyribonucleotide)n-3'-hydroxyl + 5'-phospho-(deoxyribonucleotide)m = (deoxyribonucleotide)n+m + AMP + beta-nicotinamide D-nucleotide.. DNA ligase that catalyzes the formation of phosphodiester linkages between 5'-phosphoryl and 3'-hydroxyl groups in double-stranded DNA using NAD as a coenzyme and as the energy source for the reaction. It is essential for DNA replication and repair of damaged DNA. The sequence is that of DNA ligase from Paramagnetospirillum magneticum (strain ATCC 700264 / AMB-1) (Magnetospirillum magneticum).